An 80-amino-acid polypeptide reads, in one-letter code: RNA-binding protein Hfq (80 aa).

Residues 7 to 67 enclose the Sm domain; sequence ESFLNTARKK…ITTIVPHERL (61 aa).

It belongs to the Hfq family. As to quaternary structure, homohexamer.

In terms of biological role, RNA chaperone that binds small regulatory RNA (sRNAs) and mRNAs to facilitate mRNA translational regulation in response to envelope stress, environmental stress and changes in metabolite concentrations. Also binds with high specificity to tRNAs. The sequence is that of RNA-binding protein Hfq from Aquifex aeolicus (strain VF5).